The following is a 442-amino-acid chain: UPF0489 protein C5orf22 (442 aa).

A disordered region spans residues 175–210 (SSAKKPKLALEDSENTASTNCDSSSEGLEKDTATQR). Residues 189–200 (NTASTNCDSSSE) show a composition bias toward polar residues.

It belongs to the UPF0489 family.

This chain is UPF0489 protein C5orf22 (C5orf22), found in Homo sapiens (Human).